A 481-amino-acid chain; its full sequence is Thyroid receptor-interacting protein 6 (481 aa).

Over residues 1–12 (MSGPTWLPPKQP) the composition is skewed to pro residues. The tract at residues 1 to 259 (MSGPTWLPPK…QVPLSQPPEE (259 aa)) is disordered. R25 bears the Asymmetric dimethylarginine; alternate mark. The residue at position 25 (R25) is an Omega-N-methylarginine; alternate. Y55 carries the post-translational modification Phosphotyrosine; by SRC. S92 bears the Phosphoserine mark. The span at 108–122 (DGGRGHAPRRPDRQA) shows a compositional bias: basic and acidic residues. R111 carries the post-translational modification Omega-N-methylarginine. 2 stretches are compositionally biased toward low complexity: residues 153-173 (SPYGAPTPASYATASTPAGPA) and 183-193 (PVRGCGPPRRG). R185 and R192 each carry omega-N-methylarginine. Position 195 is a phosphoserine (S195). R211 is modified (omega-N-methylarginine). Residues 221 to 233 (SHREPGPGVKEEA) show a composition bias toward basic and acidic residues. R243 bears the Omega-N-methylarginine mark. The residue at position 254 (S254) is a Phosphoserine. 3 consecutive LIM zinc-binding domains span residues 284–321 (CGGCGEDVVGDGAGVVALDRVFHVGCFVCSTCRAQLRG), 344–403 (CSTC…FAPR), and 404–472 (CSVC…RIQE). The segment at 474–481 (SATVTTDC) is interaction with MAGI1 and PTPN13.

Belongs to the zyxin/ajuba family. Specifically interacts with the ligand binding domain of the thyroid receptor (TR) in the presence of thyroid hormone. Interacts (via the third LIM domain and C-terminus) with PTPN13 (via the second PDZ domain). Interacts (via the second LIM domain or via the third LIM domain plus C-terminus) with PDLIM4 (via PDZ domain). Found in a complex with PTPN13 and PDLIM4. Interacts with SVIL isoform 2. Interacts with LPAR2 but not other LPA receptors. Interacts with PRKAA2. Interacts with MAGI1. Interacts with SCRIB. Phosphorylation at Tyr-55 by SRC is required for enhancement of lysophosphatidic acid-induced cell migration. Tyr-55 is dephosphorylated by PTPN13.

It is found in the cytoplasm. The protein resides in the cytoskeleton. It localises to the cell junction. Its subcellular location is the focal adhesion. The protein localises to the nucleus. In terms of biological role, relays signals from the cell surface to the nucleus to weaken adherens junction and promote actin cytoskeleton reorganization and cell invasiveness. Involved in lysophosphatidic acid-induced cell adhesion and migration. Acts as a transcriptional coactivator for NF-kappa-B and JUN, and mediates the transrepression of these transcription factors induced by glucocorticoid receptor. The sequence is that of Thyroid receptor-interacting protein 6 (TRIP6) from Bos taurus (Bovine).